Here is a 233-residue protein sequence, read N- to C-terminus: Nucleoside diphosphate kinase 2, chloroplastic (233 aa).

The N-terminal 67 residues, M1–K67, are a transit peptide targeting the chloroplast. Residues K93, F141, R169, T175, R186, and N196 each contribute to the ATP site. The active-site Pros-phosphohistidine intermediate is H199.

This sequence belongs to the NDK family. The cofactor is Mg(2+).

It is found in the plastid. The protein localises to the chloroplast. The enzyme catalyses a 2'-deoxyribonucleoside 5'-diphosphate + ATP = a 2'-deoxyribonucleoside 5'-triphosphate + ADP. It catalyses the reaction a ribonucleoside 5'-diphosphate + ATP = a ribonucleoside 5'-triphosphate + ADP. Major role in the synthesis of nucleoside triphosphates other than ATP. The ATP gamma phosphate is transferred to the NDP beta phosphate via a ping-pong mechanism, using a phosphorylated active-site intermediate. This Spinacia oleracea (Spinach) protein is Nucleoside diphosphate kinase 2, chloroplastic (NDPK2).